A 490-amino-acid chain; its full sequence is MRINPTTSGSEVSAVEKKNLGRIVKIIGPVLDVAFPPGKMPNIYNALVVQGRDNEQTNVTCEVQQLLGNNRVRAVAMSDTDGLMRGMEVIDTGAPISVPVGGSTLGRIFNVLGQPVDNLGPVDTNTTSPIHRSAPAFIQLDTKLSIFETGIKVVDLLAPYRRGGKIGLFGGAGVGKTVLIMELINNIAKAHGGVSVFGGVGERTREGNDLYLEMKESGVINEENIPESKVALVYGQMNEPPGARMRVGLTALTMAEYFRDVNEQDVLLFIDNIFRFVQAGSEVSALLGRMPSAVGYQPTLSTEMGSLQERITSTKEGSITSIQAVYVPADDLTDPAPATTFAHLDATTVLSRGLAAKGIYPAVDPLDSTSTMLQPRIVGEEHYETAQRVKQTLQRYKELQDIIAILGLDELSEEDRLTVARARKIERFLSQPFFVAEVFTGSPGKYVGLAETIRGFQLILSGELDGLPEQAFYLVGNIDEATAKAMNLKT.

Residue 170–177 coordinates ATP; it reads GGAGVGKT.

The protein belongs to the ATPase alpha/beta chains family. As to quaternary structure, F-type ATPases have 2 components, CF(1) - the catalytic core - and CF(0) - the membrane proton channel. CF(1) has five subunits: alpha(3), beta(3), gamma(1), delta(1), epsilon(1). CF(0) has four main subunits: a(1), b(1), b'(1) and c(9-12).

It localises to the plastid. The protein resides in the chloroplast thylakoid membrane. It catalyses the reaction ATP + H2O + 4 H(+)(in) = ADP + phosphate + 5 H(+)(out). Functionally, produces ATP from ADP in the presence of a proton gradient across the membrane. The catalytic sites are hosted primarily by the beta subunits. The sequence is that of ATP synthase subunit beta, chloroplastic from Ipomoea quamoclit (Cypress vine).